The primary structure comprises 105 residues: Protein AlbB (105 aa).

In terms of biological role, involved in the biosynthesis of albonoursin (cyclo[(alpha,beta-dehydro-Phe)-(alpha,beta-dehydro-Leu)]), an antibacterial peptide. AlbB is essential for cyclic dipeptide oxidase AlbA (CDO) activity. This Streptomyces noursei (Streptomyces albulus) protein is Protein AlbB (albB).